A 320-amino-acid chain; its full sequence is ADP/ATP translocase 4 (320 aa).

Over 1-20 the chain is Mitochondrial intermembrane; it reads MSNESSKKQSSKKALFDPVS. The stretch at 19 to 111 is one Solcar 1 repeat; sequence VSFSKDLLAG…FAFKDKYKEL (93 aa). A helical membrane pass occupies residues 21–50; sequence FSKDLLAGGVAAAVSKTAVAPIERVKLLLQ. Over 51–87 the chain is Mitochondrial matrix; sequence VQASSKQISPEARYKGMLDCLVRIPREQGFLSYWRGN. Residues 88 to 112 traverse the membrane as a helical segment; sequence LANVIRYFPTQALNFAFKDKYKELF. ADP contacts are provided by Arg-93 and Lys-105. Residues 113–122 are Mitochondrial intermembrane-facing; that stretch reads MSGVNKEKQF. Residues 123–143 traverse the membrane as a helical segment; sequence WRWFLANLASGGAAGATSLCV. Solcar repeat units follow at residues 124–214 and 221–308; these read RWFL…VKGL and TPFL…IKEF. The Mitochondrial matrix portion of the chain corresponds to 144-191; the sequence is VYPLDFARTRLGVDIGKGPEQRQFTGLGDCIMKIAKSDGLIGLYQGFG. Residues 192–212 form a helical membrane-spanning segment; the sequence is VSVQGIIVYRASYFGAYDTVK. The Mitochondrial intermembrane segment spans residues 213–223; it reads GLLPKPKETPF. Residues 224-244 traverse the membrane as a helical segment; that stretch reads LVSFIIAQIVTTCSGILSYPF. At 245–284 the chain is on the mitochondrial matrix side; sequence DTVRRRMMMQSGESDRQYKGTIDCFLKIYRHEGVPAFFRG. Arg-248 is a binding site for ADP. The tract at residues 248–253 is important for transport activity; that stretch reads RRRMMM. Residues 248 to 253 carry the Nucleotide carrier signature motif motif; the sequence is RRRMMM. A helical transmembrane segment spans residues 285-302; that stretch reads AFSNILRGTGGALVLVLY. Residues 303 to 320 lie on the Mitochondrial intermembrane side of the membrane; that stretch reads DKIKEFLNIDVGGSSSGD.

The protein belongs to the mitochondrial carrier (TC 2.A.29) family. Monomer. In terms of tissue distribution, specifically expressed in undifferentiated embryonic stem cells and germ cells. Expression is down-regulated after embryonic stem cells differentiation. In adults, only expressed in developing gametes in testis. In testis, expressed at higher level in spermatocytes. Expression is probably associated with entry of the male germ cells into meiosis. Expressed at very low level in Sertoli cells.

It is found in the mitochondrion inner membrane. It localises to the membrane. The protein resides in the cell projection. The protein localises to the cilium. Its subcellular location is the flagellum membrane. It catalyses the reaction ADP(in) + ATP(out) = ADP(out) + ATP(in). It carries out the reaction dATP(out) + ADP(in) = dATP(in) + ADP(out). The catalysed reaction is dADP(in) + ADP(out) = dADP(out) + ADP(in). The enzyme catalyses H(+)(in) = H(+)(out). Its activity is regulated as follows. The matrix-open state (m-state) is inhibited by the membrane-permeable bongkrekic acid (BKA). The cytoplasmic-open state (c-state) is inhibited by the membrane-impermeable toxic inhibitor carboxyatractyloside (CATR). Proton transporter activity is inhibited by ADP:ATP antiporter activity. Functionally, ADP:ATP antiporter that mediates import of ADP into the mitochondrial matrix for ATP synthesis, and export of ATP out to fuel the cell. Cycles between the cytoplasmic-open state (c-state) and the matrix-open state (m-state): operates by the alternating access mechanism with a single substrate-binding site intermittently exposed to either the cytosolic (c-state) or matrix (m-state) side of the inner mitochondrial membrane. Specifically required during spermatogenesis, probably to mediate ADP:ATP exchange in spermatocytes. Large ATP supplies from mitochondria may be critical for normal progression of spermatogenesis during early stages of meiotic prophase I, including DNA double-strand break repair and chromosomal synapsis. In addition to its ADP:ATP antiporter activity, also involved in mitochondrial uncoupling and mitochondrial permeability transition pore (mPTP) activity. Plays a role in mitochondrial uncoupling by acting as a proton transporter: proton transport uncouples the proton flows via the electron transport chain and ATP synthase to reduce the efficiency of ATP production and cause mitochondrial thermogenesis. Proton transporter activity is inhibited by ADP:ATP antiporter activity, suggesting that SLC25A31/ANT4 acts as a master regulator of mitochondrial energy output by maintaining a delicate balance between ATP production (ADP:ATP antiporter activity) and thermogenesis (proton transporter activity). Proton transporter activity requires free fatty acids as cofactor, but does not transport it. Among nucleotides, may also exchange ADP for dATP and dADP. Also plays a key role in mPTP opening, a non-specific pore that enables free passage of the mitochondrial membranes to solutes of up to 1.5 kDa, and which contributes to cell death. It is however unclear if SLC25A31/ANT4 constitutes a pore-forming component of mPTP or regulates it. This Mus musculus (Mouse) protein is ADP/ATP translocase 4.